Here is a 274-residue protein sequence, read N- to C-terminus: Siroheme biosynthesis protein MET8 (274 aa).

Residues 23 to 24 (EV), 43 to 45 (SPD), and Phe93 each bind NAD(+). Asp141 (proton acceptor) is an active-site residue.

The protein belongs to the precorrin-2 dehydrogenase / sirohydrochlorin ferrochelatase family. MET8 subfamily. In terms of assembly, homodimer.

The catalysed reaction is precorrin-2 + NAD(+) = sirohydrochlorin + NADH + 2 H(+). The enzyme catalyses siroheme + 2 H(+) = sirohydrochlorin + Fe(2+). It functions in the pathway porphyrin-containing compound metabolism; siroheme biosynthesis; siroheme from sirohydrochlorin: step 1/1. It participates in porphyrin-containing compound metabolism; siroheme biosynthesis; sirohydrochlorin from precorrin-2: step 1/1. In terms of biological role, catalyzes the conversion of precorrin-2 into siroheme. This reaction consist of the NAD-dependent oxidation of precorrin-2 into sirohydrochlorin and its subsequent ferrochelation into siroheme. This chain is Siroheme biosynthesis protein MET8, found in Saccharomyces cerevisiae (strain ATCC 204508 / S288c) (Baker's yeast).